A 120-amino-acid polypeptide reads, in one-letter code: Putative defensin-like protein 179 (120 aa).

The signal sequence occupies residues 1-27; that stretch reads MERTSTSLLFLLSLLIIFASAVNQIRA. 7 disulfide bridges follow: Cys-37-Cys-56, Cys-40-Cys-63, Cys-44-Cys-65, Cys-74-Cys-120, Cys-85-Cys-105, Cys-90-Cys-114, and Cys-94-Cys-116.

It belongs to the DEFL family.

The protein resides in the secreted. This is Putative defensin-like protein 179 (LCR57) from Arabidopsis thaliana (Mouse-ear cress).